The following is a 307-amino-acid chain: Transposase InsD for insertion element IS2-9 (307 aa).

In terms of domain architecture, Integrase catalytic spans 112 to 295; that stretch reads KPAVPPSKRA…SPREYLRQRA (184 aa).

Its function is as follows. Involved in the transposition of the insertion sequence IS2. The protein is Transposase InsD for insertion element IS2-9 of Escherichia coli (strain K12).